Reading from the N-terminus, the 189-residue chain is Mediator of RNA polymerase II transcription subunit 10b (189 aa).

Residues 1-22 (MDPTQNTSAGIGGSNGTIRYQT) are disordered.

It belongs to the Mediator complex subunit 10 family. Component of the Mediator complex.

It localises to the nucleus. Its function is as follows. Component of the Mediator complex, a coactivator involved in the regulated transcription of nearly all RNA polymerase II-dependent genes. Mediator functions as a bridge to convey information from gene-specific regulatory proteins to the basal RNA polymerase II transcription machinery. The Mediator complex, having a compact conformation in its free form, is recruited to promoters by direct interactions with regulatory proteins and serves for the assembly of a functional preinitiation complex with RNA polymerase II and the general transcription factors. The chain is Mediator of RNA polymerase II transcription subunit 10b (MED10B) from Arabidopsis thaliana (Mouse-ear cress).